We begin with the raw amino-acid sequence, 119 residues long: Holo-[acyl-carrier-protein] synthase (119 aa).

Mg(2+) contacts are provided by Asp-7 and Glu-56.

This sequence belongs to the P-Pant transferase superfamily. AcpS family. The cofactor is Mg(2+).

It is found in the cytoplasm. The catalysed reaction is apo-[ACP] + CoA = holo-[ACP] + adenosine 3',5'-bisphosphate + H(+). In terms of biological role, transfers the 4'-phosphopantetheine moiety from coenzyme A to a Ser of acyl-carrier-protein. This Chlamydia trachomatis serovar D (strain ATCC VR-885 / DSM 19411 / UW-3/Cx) protein is Holo-[acyl-carrier-protein] synthase.